A 449-amino-acid polypeptide reads, in one-letter code: Probable phosphoglucosamine mutase (449 aa).

Ser96 (phosphoserine intermediate) is an active-site residue. Mg(2+)-binding residues include Ser96, Asp233, Asp235, and Asp237. Phosphoserine is present on Ser96.

This sequence belongs to the phosphohexose mutase family. Requires Mg(2+) as cofactor. Activated by phosphorylation.

The catalysed reaction is alpha-D-glucosamine 1-phosphate = D-glucosamine 6-phosphate. Functionally, catalyzes the conversion of glucosamine-6-phosphate to glucosamine-1-phosphate. Does not display phosphoglucomutase (PGM) or phosphomannomutase (PMM) activities. This is Probable phosphoglucosamine mutase (glmM) from Thermococcus kodakarensis (strain ATCC BAA-918 / JCM 12380 / KOD1) (Pyrococcus kodakaraensis (strain KOD1)).